Here is a 366-residue protein sequence, read N- to C-terminus: Sigma54-dependent transcriptional activator SfnR (366 aa).

One can recognise a Sigma-54 factor interaction domain in the interval glutamine 21–leucine 250. Residues glycine 49–glutamate 56 and alanine 112–glutamate 121 contribute to the ATP site.

In terms of biological role, involved in the dimethyl sulfide degradation pathway. Activates the expression of sfnG and sfnF. The chain is Sigma54-dependent transcriptional activator SfnR from Pseudomonas putida (Arthrobacter siderocapsulatus).